The sequence spans 206 residues: Large ribosomal subunit protein uL4 (206 aa).

The protein belongs to the universal ribosomal protein uL4 family. Part of the 50S ribosomal subunit.

One of the primary rRNA binding proteins, this protein initially binds near the 5'-end of the 23S rRNA. It is important during the early stages of 50S assembly. It makes multiple contacts with different domains of the 23S rRNA in the assembled 50S subunit and ribosome. Its function is as follows. Forms part of the polypeptide exit tunnel. In Methylobacterium radiotolerans (strain ATCC 27329 / DSM 1819 / JCM 2831 / NBRC 15690 / NCIMB 10815 / 0-1), this protein is Large ribosomal subunit protein uL4.